The following is a 436-amino-acid chain: Trigger factor (436 aa).

In terms of domain architecture, PPIase FKBP-type spans 163–248 (GDTVNIDFDG…VNEIKYKDVP (86 aa)).

This sequence belongs to the FKBP-type PPIase family. Tig subfamily.

It localises to the cytoplasm. It catalyses the reaction [protein]-peptidylproline (omega=180) = [protein]-peptidylproline (omega=0). Functionally, involved in protein export. Acts as a chaperone by maintaining the newly synthesized protein in an open conformation. Functions as a peptidyl-prolyl cis-trans isomerase. This is Trigger factor from Staphylococcus saprophyticus subsp. saprophyticus (strain ATCC 15305 / DSM 20229 / NCIMB 8711 / NCTC 7292 / S-41).